The sequence spans 276 residues: NH(3)-dependent NAD(+) synthetase (276 aa).

43-50 (GISGGVDS) contacts ATP. Residue Asp49 coordinates Mg(2+). Position 146 (Arg146) interacts with deamido-NAD(+). Thr166 is a binding site for ATP. Glu171 contributes to the Mg(2+) binding site. Deamido-NAD(+) contacts are provided by Lys179 and Asp186. ATP is bound by residues Lys195 and Thr217. 266 to 267 (HK) lines the deamido-NAD(+) pocket.

The protein belongs to the NAD synthetase family. In terms of assembly, homodimer.

It catalyses the reaction deamido-NAD(+) + NH4(+) + ATP = AMP + diphosphate + NAD(+) + H(+). It functions in the pathway cofactor biosynthesis; NAD(+) biosynthesis; NAD(+) from deamido-NAD(+) (ammonia route): step 1/1. In terms of biological role, catalyzes the ATP-dependent amidation of deamido-NAD to form NAD. Uses ammonia as a nitrogen source. This is NH(3)-dependent NAD(+) synthetase from Shewanella oneidensis (strain ATCC 700550 / JCM 31522 / CIP 106686 / LMG 19005 / NCIMB 14063 / MR-1).